The chain runs to 119 residues: Large ribosomal subunit protein uL18 (119 aa).

It belongs to the universal ribosomal protein uL18 family. Part of the 50S ribosomal subunit; part of the 5S rRNA/L5/L18/L25 subcomplex. Contacts the 5S and 23S rRNAs.

Functionally, this is one of the proteins that bind and probably mediate the attachment of the 5S RNA into the large ribosomal subunit, where it forms part of the central protuberance. In Cupriavidus necator (strain ATCC 17699 / DSM 428 / KCTC 22496 / NCIMB 10442 / H16 / Stanier 337) (Ralstonia eutropha), this protein is Large ribosomal subunit protein uL18.